The sequence spans 174 residues: Co-chaperone protein HscB homolog (174 aa).

In terms of domain architecture, J spans 2-74 (NYFELFSFTP…ILRAEHMLSL (73 aa)).

This sequence belongs to the HscB family. Interacts with HscA and stimulates its ATPase activity.

In terms of biological role, co-chaperone involved in the maturation of iron-sulfur cluster-containing proteins. Seems to help targeting proteins to be folded toward HscA. The protein is Co-chaperone protein HscB homolog of Shewanella woodyi (strain ATCC 51908 / MS32).